Consider the following 209-residue polypeptide: Response regulator protein VraR (209 aa).

The region spanning 4–120 is the Response regulatory domain; sequence KVLFVDDHEM…DIADAVRKTS (117 aa). 4-aspartylphosphate is present on Asp-55. An HTH luxR-type domain is found at 141-206; that stretch reads RAELYEMLTE…QAVIYAFQHN (66 aa). Positions 165–184 form a DNA-binding region, H-T-H motif; sequence NQEIASASHITIKTVKTHVS.

In terms of assembly, homodimer. Phosphorylated by VraS. Phosphorylation state of VraR controls dimerization of the protein.

In terms of biological role, member of the two-component regulatory system VraS/VraR involved in the control of the cell wall peptidoglycan biosynthesis. Upon cellular stress, the histidine kinase VraS transfers the phosphoryl group onto VraR. Upon phosphorylation, VraR dimerizes at the N-terminal domain. In turn, phosphorylation-induced dimerization expand and enhance the VraR binding to its own promoter leading to increased expression and subsequent modulation of as many as 40 genes, which ultimately constitute the S.aureus response to cell wall damage. In addition, inhibits the host autophagic flux and delays the early stage of autophagosome formation, thereby promoting bacterial survival. Facilitates the ability of S.aureus to resist host polymorphonuclear leukocytes-mediated phagocytosis and killing thus contributing to immune evasion. The chain is Response regulator protein VraR (vraR) from Staphylococcus aureus (strain NCTC 8325 / PS 47).